Here is a 509-residue protein sequence, read N- to C-terminus: MNTATTTDNNAVRKHDVRKELFVDGYEVVIGIEIHCQLNTESKIFSSAPTDFGHEPNSQASIVDLGLPGVLPVLNAGVVDRALKFGIGVNAELGLFNTFDRKNYFYPDLPKGYQITQMANPIVGEGYIDVVVNEGEKNEYPKRMGITRAHLEEDAGKSVHDAVDGMTGVDLNRAGTPLIEIVSEPDMRSAHEALAYIKAIHQLVTWLGISDAIMAEGSFRCDCNVSIRKPGAELGTRTELKNLNSFRFIERAINREIERQIDILEDGGKVVQATMLYDPERDETRVMRTKEDANDYRYFPDPDLLPVRIEQHTVDSIRAAMPELPVARRARFEEALGLSEYDARILTGSRQIADYFENVVAEVGQADAKMAANWVMGDLLGALNKDDKEITDSPISAKQLAGMLSRIKDDTLSGKLAKKVFSALYEREGGDADDAADKIIEEKGLKQETDTGAIKAIVEDVIAKNAAMVEEYRGGKEKAFNGLVGQVMKASRGSANPQQVNQILKELLG.

The protein belongs to the GatB/GatE family. GatB subfamily. Heterotrimer of A, B and C subunits.

The catalysed reaction is L-glutamyl-tRNA(Gln) + L-glutamine + ATP + H2O = L-glutaminyl-tRNA(Gln) + L-glutamate + ADP + phosphate + H(+). The enzyme catalyses L-aspartyl-tRNA(Asn) + L-glutamine + ATP + H2O = L-asparaginyl-tRNA(Asn) + L-glutamate + ADP + phosphate + 2 H(+). Allows the formation of correctly charged Asn-tRNA(Asn) or Gln-tRNA(Gln) through the transamidation of misacylated Asp-tRNA(Asn) or Glu-tRNA(Gln) in organisms which lack either or both of asparaginyl-tRNA or glutaminyl-tRNA synthetases. The reaction takes place in the presence of glutamine and ATP through an activated phospho-Asp-tRNA(Asn) or phospho-Glu-tRNA(Gln). This Psychrobacter cryohalolentis (strain ATCC BAA-1226 / DSM 17306 / VKM B-2378 / K5) protein is Aspartyl/glutamyl-tRNA(Asn/Gln) amidotransferase subunit B.